Consider the following 150-residue polypeptide: uncharacterized protein (150 aa).

Residues 3-145 (VAILSGSVYG…DAEPWLAEFA (143 aa)) form the Flavodoxin-like domain.

It belongs to the flavodoxin family. MioC subfamily. Requires FMN as cofactor.

Functionally, probable electron transporter. This is an uncharacterized protein from Pseudomonas aeruginosa (strain ATCC 15692 / DSM 22644 / CIP 104116 / JCM 14847 / LMG 12228 / 1C / PRS 101 / PAO1).